Reading from the N-terminus, the 151-residue chain is Probable cGMP 3',5'-cyclic phosphodiesterase subunit delta (151 aa).

Belongs to the PDE6D/unc-119 family. In terms of assembly, interacts with Pde6.

The protein localises to the nucleus. It is found in the cytoplasm. This is Probable cGMP 3',5'-cyclic phosphodiesterase subunit delta from Anopheles gambiae (African malaria mosquito).